The chain runs to 600 residues: Pentatricopeptide repeat-containing protein At3g29230 (600 aa).

13 PPR repeats span residues 50–80 (DLHIAPKLISALSLCRQTNLAVRVFNQVQEP), 81–115 (NVHLCNSLIRAHAQNSQPYQAFFVFSEMQRFGLFA), 116–150 (DNFTYPFLLKACSGQSWLPVVKMMHNHIEKLGLSS), 151–183 (DIYVPNALIDCYSRCGGLGVRDAMKLFEKMSER), 184–218 (DTVSWNSMLGGLVKAGELRDARRLFDEMPQRDLIS), 219–245 (WNTMLDGYARCREMSKAFELFEKMPER), 246–276 (NTVSWSTMVMGYSKAGDMEMARVMFDKMPLP), 279–313 (NVVTWTIIIAGYAEKGLLKEADRLVDQMVASGLKF), 314–348 (DAAAVISILAACTESGLLSLGMRIHSILKRSNLGS), 349–379 (NAYVLNALLDMYAKCGNLKKAFDVFNDIPKK), 380–414 (DLVSWNTMLHGLGVHGHGKEAIELFSRMRREGIRP), 415–445 (DKVTFIAVLCSCNHAGLIDEGIDYFYSMEKV), and 451–481 (QVEHYGCLVDLLGRVGRLKEAIKVVQTMPME). Residues 486–561 (IWGALLGACR…PSGASSVELE (76 aa)) form a type E motif region. Residues 562 to 592 (DGIHEFTVFDKSHPKSDQIYQMLGSLIEPPD) are type E(+) motif.

Belongs to the PPR family. PCMP-E subfamily.

The polypeptide is Pentatricopeptide repeat-containing protein At3g29230 (PCMP-E27) (Arabidopsis thaliana (Mouse-ear cress)).